The primary structure comprises 88 residues: Translation initiation factor IF-1 2 (88 aa).

Residues 1-72 (MAKEELIEMQ…TKGRITFRHL (72 aa)) enclose the S1-like domain.

It belongs to the IF-1 family. Component of the 30S ribosomal translation pre-initiation complex which assembles on the 30S ribosome in the order IF-2 and IF-3, IF-1 and N-formylmethionyl-tRNA(fMet); mRNA recruitment can occur at any time during PIC assembly.

Its subcellular location is the cytoplasm. In terms of biological role, one of the essential components for the initiation of protein synthesis. Stabilizes the binding of IF-2 and IF-3 on the 30S subunit to which N-formylmethionyl-tRNA(fMet) subsequently binds. Helps modulate mRNA selection, yielding the 30S pre-initiation complex (PIC). Upon addition of the 50S ribosomal subunit IF-1, IF-2 and IF-3 are released leaving the mature 70S translation initiation complex. The polypeptide is Translation initiation factor IF-1 2 (Acidovorax sp. (strain JS42)).